A 186-amino-acid chain; its full sequence is Ribosome-recycling factor (186 aa).

Belongs to the RRF family.

It localises to the cytoplasm. Its function is as follows. Responsible for the release of ribosomes from messenger RNA at the termination of protein biosynthesis. May increase the efficiency of translation by recycling ribosomes from one round of translation to another. The polypeptide is Ribosome-recycling factor (Pelodictyon phaeoclathratiforme (strain DSM 5477 / BU-1)).